The sequence spans 57 residues: MYKCVPSYYSKAGTIVVTYCEISALLVSLKNRVQGKRGETEGQIEISRKAGHPAPAF.

The segment at 34-57 (QGKRGETEGQIEISRKAGHPAPAF) is disordered.

This is an uncharacterized protein from Saccharomyces cerevisiae (strain ATCC 204508 / S288c) (Baker's yeast).